A 491-amino-acid chain; its full sequence is 2,3-bisphosphoglycerate-independent phosphoglycerate mutase (491 aa).

Positions 11 and 61 each coordinate Mn(2+). Ser61 (phosphoserine intermediate) is an active-site residue. Substrate contacts are provided by residues His118, 147-148 (RD), Arg177, Arg183, 248-251 (RSDR), and Lys320. Asp386, His390, Asp427, His428, and His445 together coordinate Mn(2+).

It belongs to the BPG-independent phosphoglycerate mutase family. Monomer. The cofactor is Mn(2+).

The enzyme catalyses (2R)-2-phosphoglycerate = (2R)-3-phosphoglycerate. It participates in carbohydrate degradation; glycolysis; pyruvate from D-glyceraldehyde 3-phosphate: step 3/5. In terms of biological role, catalyzes the interconversion of 2-phosphoglycerate and 3-phosphoglycerate. This is 2,3-bisphosphoglycerate-independent phosphoglycerate mutase from Aliarcobacter butzleri (strain RM4018) (Arcobacter butzleri).